A 550-amino-acid polypeptide reads, in one-letter code: Cytochrome P450 monooxygenase FFUJ_09176 (550 aa).

Positions 1-31 (MLQTIPMPSRELTIALAVLSLLMVLVQRAGS) are cleaved as a signal peptide. Residues 430–441 (FIPERFEGDTRS) are compositionally biased toward basic and acidic residues. Residues 430–451 (FIPERFEGDTRSSQESAASPDV) are disordered. C466 contributes to the heme binding site.

Belongs to the cytochrome P450 family.

Functionally, cytochrome P450 monooxygenase; part of the DMATS1 gene cluster that mediates the biosynthesis of a reversely N-prenylated monomeric L-tryptophan (r-N-DMAT). Seems not to contribute to the final DMATS1 product. In Gibberella fujikuroi (strain CBS 195.34 / IMI 58289 / NRRL A-6831) (Bakanae and foot rot disease fungus), this protein is Cytochrome P450 monooxygenase FFUJ_09176.